A 170-amino-acid polypeptide reads, in one-letter code: Peptide deformylase (170 aa).

The Fe cation site is built by cysteine 93 and histidine 135. The active site involves glutamate 136. Histidine 139 provides a ligand contact to Fe cation.

This sequence belongs to the polypeptide deformylase family. The cofactor is Fe(2+).

The catalysed reaction is N-terminal N-formyl-L-methionyl-[peptide] + H2O = N-terminal L-methionyl-[peptide] + formate. Functionally, removes the formyl group from the N-terminal Met of newly synthesized proteins. Requires at least a dipeptide for an efficient rate of reaction. N-terminal L-methionine is a prerequisite for activity but the enzyme has broad specificity at other positions. This Syntrophobacter fumaroxidans (strain DSM 10017 / MPOB) protein is Peptide deformylase.